The sequence spans 336 residues: HTH-type transcriptional regulator RafR (336 aa).

One can recognise an HTH lacI-type domain in the interval Ser2–Thr55. The H-T-H motif DNA-binding region spans Leu3–Gly22.

In terms of assembly, homodimer.

Its function is as follows. Repressor that negatively controls the expression of the raffinose (raf) operon by binding to the raf operator (rafO) DNA. Acts by binding to two operator sites, O1 and 02, which flank the -35 raf promoter box. RafR bound to 02 alone results in 45 % repression of transcription, whereas RafR bound to O1 leads to only 6% repression. The chain is HTH-type transcriptional regulator RafR from Escherichia coli.